The sequence spans 204 residues: uncharacterized protein (204 aa).

2 disordered regions span residues 1–37 and 159–204; these read MRAL…GSVS and GYRP…DGEL. Over residues 28–37 the composition is skewed to low complexity; sequence GRGPRAGSVS. The region spanning 88–175 is the WGR domain; the sequence is PYRLYVERLD…LPKEKWPAEA (88 aa). Basic and acidic residues-rich tracts occupy residues 166-179 and 188-204; these read LPKE…EHES and PEGH…DGEL.

This is an uncharacterized protein from Sinorhizobium fredii (strain NBRC 101917 / NGR234).